The following is a 1039-amino-acid chain: uncharacterized protein (1039 aa).

Residues 1–19 (MSLLMAHRKSKSSQRKLRN) are compositionally biased toward basic residues. The disordered stretch occupies residues 1 to 38 (MSLLMAHRKSKSSQRKLRNRSSSLTPQKRRIRASKGSH).

This is an uncharacterized protein from Sinorhizobium fredii (strain NBRC 101917 / NGR234).